A 115-amino-acid polypeptide reads, in one-letter code: Holo-[acyl-carrier-protein] synthase (115 aa).

Mg(2+) contacts are provided by Asp-5 and Glu-51.

Belongs to the P-Pant transferase superfamily. AcpS family. It depends on Mg(2+) as a cofactor.

It is found in the cytoplasm. The catalysed reaction is apo-[ACP] + CoA = holo-[ACP] + adenosine 3',5'-bisphosphate + H(+). Transfers the 4'-phosphopantetheine moiety from coenzyme A to a Ser of acyl-carrier-protein. The chain is Holo-[acyl-carrier-protein] synthase from Helicobacter acinonychis (strain Sheeba).